The primary structure comprises 430 residues: Histidinol dehydrogenase (430 aa).

NAD(+) is bound by residues Tyr-124, Gln-185, and Asn-208. Residues Ser-233, Gln-255, and His-258 each coordinate substrate. Zn(2+)-binding residues include Gln-255 and His-258. Residues Glu-324 and His-325 each act as proton acceptor in the active site. Positions 325, 358, 412, and 418 each coordinate substrate. Asp-358 contributes to the Zn(2+) binding site. His-418 lines the Zn(2+) pocket.

This sequence belongs to the histidinol dehydrogenase family. The cofactor is Zn(2+).

It catalyses the reaction L-histidinol + 2 NAD(+) + H2O = L-histidine + 2 NADH + 3 H(+). Its pathway is amino-acid biosynthesis; L-histidine biosynthesis; L-histidine from 5-phospho-alpha-D-ribose 1-diphosphate: step 9/9. Catalyzes the sequential NAD-dependent oxidations of L-histidinol to L-histidinaldehyde and then to L-histidine. The polypeptide is Histidinol dehydrogenase (Leptospira biflexa serovar Patoc (strain Patoc 1 / Ames)).